The sequence spans 157 residues: 2-C-methyl-D-erythritol 2,4-cyclodiphosphate synthase (157 aa).

Residues Asp8, His10, and His42 each coordinate a divalent metal cation. 8–10 is a 4-CDP-2-C-methyl-D-erythritol 2-phosphate binding site; that stretch reads DVH. Residues 56 to 58, 132 to 135, Phe139, and Arg142 contribute to the 4-CDP-2-C-methyl-D-erythritol 2-phosphate site; these read DIG and STSE.

It belongs to the IspF family. Homotrimer. It depends on a divalent metal cation as a cofactor.

It catalyses the reaction 4-CDP-2-C-methyl-D-erythritol 2-phosphate = 2-C-methyl-D-erythritol 2,4-cyclic diphosphate + CMP. Its pathway is isoprenoid biosynthesis; isopentenyl diphosphate biosynthesis via DXP pathway; isopentenyl diphosphate from 1-deoxy-D-xylulose 5-phosphate: step 4/6. Its function is as follows. Involved in the biosynthesis of isopentenyl diphosphate (IPP) and dimethylallyl diphosphate (DMAPP), two major building blocks of isoprenoid compounds. Catalyzes the conversion of 4-diphosphocytidyl-2-C-methyl-D-erythritol 2-phosphate (CDP-ME2P) to 2-C-methyl-D-erythritol 2,4-cyclodiphosphate (ME-CPP) with a corresponding release of cytidine 5-monophosphate (CMP). The polypeptide is 2-C-methyl-D-erythritol 2,4-cyclodiphosphate synthase (Dehalococcoides mccartyi (strain CBDB1)).